A 313-amino-acid polypeptide reads, in one-letter code: MTQWYPASPALWQGRDDSIEAPDARRLFQTVTRSETFSPENWQQKIALMGFACDEGVKRNAGRPGAAGAPDALRKALANMASHQGHERLVDLGNWVAPTPDLEGAQQALRDAVSRCLRAGMRTLVLGGGHETAFGHGAGVLDAFAQESVGIINLDAHLDLRQTDRATSGTPFRQLAQLCDAQSRAFHYACFGVSRAANTQALWREAQWRNVTVVEDLDCHDALAQMAQFIDKVDKIYLTIDLDVLPVWEMPAVSAPAALGVPLIQVLRLIEPVCRSGKLQAADLVEFNPRFDEDGAAARVAARLGWQIAHWWR.

6 residues coordinate Mn(2+): histidine 130, aspartate 155, histidine 157, aspartate 159, aspartate 241, and aspartate 243.

This sequence belongs to the arginase family. It depends on Mn(2+) as a cofactor.

It carries out the reaction N-formimidoyl-L-glutamate + H2O = formamide + L-glutamate. It participates in amino-acid degradation; L-histidine degradation into L-glutamate; L-glutamate from N-formimidoyl-L-glutamate (hydrolase route): step 1/1. Its function is as follows. Catalyzes the conversion of N-formimidoyl-L-glutamate to L-glutamate and formamide. This Salmonella heidelberg (strain SL476) protein is Formimidoylglutamase.